Here is a 114-residue protein sequence, read N- to C-terminus: FK506-binding protein 1 (114 aa).

Positions 26 to 114 (GDLVTIHYTG…IFDVELLKVN (89 aa)) constitute a PPIase FKBP-type domain.

The protein belongs to the FKBP-type PPIase family. FKBP1 subfamily.

It is found in the cytoplasm. The enzyme catalyses [protein]-peptidylproline (omega=180) = [protein]-peptidylproline (omega=0). Its activity is regulated as follows. Inhibited by both FK506 and rapamycin. Functionally, PPIases accelerate the folding of proteins. It catalyzes the cis-trans isomerization of proline imidic peptide bonds in oligopeptides. This chain is FK506-binding protein 1 (FPR1), found in Candida glabrata (strain ATCC 2001 / BCRC 20586 / JCM 3761 / NBRC 0622 / NRRL Y-65 / CBS 138) (Yeast).